A 172-amino-acid polypeptide reads, in one-letter code: Type IV secretion system putative outer membrane lipoprotein BMEII0036 (172 aa).

A signal peptide spans 1–15 (MRTLVMVACAVSLAA). Residue Cys-16 is the site of N-palmitoyl cysteine attachment. Cys-16 is lipidated: S-diacylglycerol cysteine. An OmpA-like domain is found at 58–172 (WPARPPKQTV…RRVDIEILRK (115 aa)).

It is found in the cell outer membrane. This chain is Type IV secretion system putative outer membrane lipoprotein BMEII0036, found in Brucella melitensis biotype 1 (strain ATCC 23456 / CCUG 17765 / NCTC 10094 / 16M).